Here is a 100-residue protein sequence, read N- to C-terminus: Cytochrome b (100 aa).

Helical transmembrane passes span 1-21, 45-66, and 81-100; these read MGSLLGLCLIVQIITGLFLAM, WLIRNFHANGASLFFICIYLHI, and WNIGVILLLLTMMTAFVGYV. Heme b is bound by residues His-51 and His-65.

Belongs to the cytochrome b family. In terms of assembly, the cytochrome bc1 complex contains 3 respiratory subunits (MT-CYB, CYC1 and UQCRFS1), 2 core proteins (UQCRC1 and UQCRC2) and probably 6 low-molecular weight proteins. Heme b is required as a cofactor.

Its subcellular location is the mitochondrion inner membrane. Its function is as follows. Component of the ubiquinol-cytochrome c reductase complex (complex III or cytochrome b-c1 complex) that is part of the mitochondrial respiratory chain. The b-c1 complex mediates electron transfer from ubiquinol to cytochrome c. Contributes to the generation of a proton gradient across the mitochondrial membrane that is then used for ATP synthesis. In Polypterus sp. (Bichir), this protein is Cytochrome b (mt-cyb).